Reading from the N-terminus, the 268-residue chain is Shikimate dehydrogenase (NADP(+)) (268 aa).

Shikimate is bound by residues 13 to 15 (SLS) and Thr60. Lys64 functions as the Proton acceptor in the catalytic mechanism. Glu76 contacts NADP(+). Shikimate contacts are provided by Asn85 and Asp100. NADP(+)-binding positions include 124 to 128 (GAGGA), 148 to 153 (NRTMAR), and Ile209. Tyr211 serves as a coordination point for shikimate. An NADP(+)-binding site is contributed by Gly232.

It belongs to the shikimate dehydrogenase family. In terms of assembly, homodimer.

It catalyses the reaction shikimate + NADP(+) = 3-dehydroshikimate + NADPH + H(+). The protein operates within metabolic intermediate biosynthesis; chorismate biosynthesis; chorismate from D-erythrose 4-phosphate and phosphoenolpyruvate: step 4/7. Its function is as follows. Involved in the biosynthesis of the chorismate, which leads to the biosynthesis of aromatic amino acids. Catalyzes the reversible NADPH linked reduction of 3-dehydroshikimate (DHSA) to yield shikimate (SA). In Staphylococcus aureus (strain USA300), this protein is Shikimate dehydrogenase (NADP(+)).